Reading from the N-terminus, the 376-residue chain is Chaperone protein DnaJ (376 aa).

A J domain is found at 5 to 70 (DYYEVLGVAR…QKRAAYDQFG (66 aa)). Residues 134–212 (GTSVKIKVPT…CHGHGRVEET (79 aa)) form a CR-type zinc finger. Zn(2+) contacts are provided by Cys147, Cys150, Cys164, Cys167, Cys186, Cys189, Cys200, and Cys203. CXXCXGXG motif repeat units lie at residues 147–154 (CTNCGGSG), 164–171 (CNTCGGHG), 186–193 (CPTCRGQG), and 200–207 (CNKCHGHG).

The protein belongs to the DnaJ family. In terms of assembly, homodimer. It depends on Zn(2+) as a cofactor.

It localises to the cytoplasm. Functionally, participates actively in the response to hyperosmotic and heat shock by preventing the aggregation of stress-denatured proteins and by disaggregating proteins, also in an autonomous, DnaK-independent fashion. Unfolded proteins bind initially to DnaJ; upon interaction with the DnaJ-bound protein, DnaK hydrolyzes its bound ATP, resulting in the formation of a stable complex. GrpE releases ADP from DnaK; ATP binding to DnaK triggers the release of the substrate protein, thus completing the reaction cycle. Several rounds of ATP-dependent interactions between DnaJ, DnaK and GrpE are required for fully efficient folding. Also involved, together with DnaK and GrpE, in the DNA replication of plasmids through activation of initiation proteins. The chain is Chaperone protein DnaJ from Teredinibacter turnerae (strain ATCC 39867 / T7901).